We begin with the raw amino-acid sequence, 87 residues long: Small ribosomal subunit protein bS20 (87 aa).

The segment covering 1-11 has biased composition (basic residues); the sequence is MANIKSKKKRI. A disordered region spans residues 1 to 25; it reads MANIKSKKKRIKTNEKARQRNKAIR.

Belongs to the bacterial ribosomal protein bS20 family.

In terms of biological role, binds directly to 16S ribosomal RNA. The polypeptide is Small ribosomal subunit protein bS20 (Corynebacterium kroppenstedtii (strain DSM 44385 / JCM 11950 / CIP 105744 / CCUG 35717)).